The chain runs to 498 residues: Thiamine transporter 1 (498 aa).

Met1 carries the N-acetylmethionine modification. At 1-28 (MDVPARVSRRAAAAAARMLLRTARVPRE) the chain is on the cytoplasmic side. The helical transmembrane segment at 29 to 46 (CWFLPTALLCAYGFFANL) threads the bilayer. Topologically, residues 47–71 (RPSEPFLTPYLLGPDKNLTERQVYN) are extracellular. Asn63 is a glycosylation site (N-linked (GlcNAc...) asparagine). Residues 72–92 (EIYPVWTYSYLLLLFPVFLAT) traverse the membrane as a helical segment. Residues 93-105 (DYLRYKPVILLQG) lie on the Cytoplasmic side of the membrane. The helical transmembrane segment at 106-126 (LSLIVTWFMLLYAQGLLAIQF) threads the bilayer. Over 127-128 (LE) the chain is Extracellular. A helical transmembrane segment spans residues 129–149 (FFYGIATATEIAYYSYIYTVV). Residues 150-164 (DLGMYQKVTSYCRSA) lie on the Cytoplasmic side of the membrane. Residues 165–185 (TLVGFTVGSVLGQILVSVVGW) traverse the membrane as a helical segment. Position 186 (Ser186) is a topological domain, extracellular. A helical transmembrane segment spans residues 187-207 (LFSLNVISLTCVSVAFAVAWF). At 208–295 (LPMPQKSLFF…DFLMCYSSRP (88 aa)) the chain is on the cytoplasmic side. Ser222 bears the Phosphoserine mark. Residues 296–316 (LLCWSVWWALSTCGYFQVVNY) form a helical membrane-spanning segment. Over 317 to 334 (AQGLWEKVMPSQNADIYN) the chain is Extracellular. The chain crosses the membrane as a helical span at residues 335-355 (GGVEAVSTLLGASAVFAVGYI). The Cytoplasmic segment spans residues 356-360 (KLSWS). The chain crosses the membrane as a helical span at residues 361–381 (TWGEMTLFLCSLLIAAAVYVM). Residues 382–386 (DTVQS) lie on the Extracellular side of the membrane. A helical transmembrane segment spans residues 387-407 (IWVCYASYVVFRIIYMVLITI). At 408–423 (ATFQIAANLSMERYAL) the chain is on the cytoplasmic side. The chain crosses the membrane as a helical span at residues 424–444 (VFGVNTFIALALQTLLTLIVV). The Extracellular portion of the chain corresponds to 445-456 (DARGLGLCITTQ). Residues 457 to 477 (FLIYASYFAAISVVFLANGIV) form a helical membrane-spanning segment. At 478–498 (SIIKKCRKQEDPSSSPQASTS) the chain is on the cytoplasmic side.

The protein belongs to the reduced folate carrier (RFC) transporter (TC 2.A.48) family. In terms of assembly, interacts with TSPAN1; this interaction increases the stability of SLC19A2. Interacts with TMEM63B. Expressed in liver. Expressed in cochlear hair cells and duodenum (at protein level). Detected in pancreatic acinar cells (at protein level). Also expressed strongly in pancreatic islet cells. Expressed in the testis. In terms of tissue distribution, very highly expressed in liver, and also detected at lower levels in heart, testis, kidney, brain and spleen. As to expression, expressed at low levels in liver and spleen.

The protein localises to the cell membrane. It carries out the reaction thiamine(out) + H(+)(in) = thiamine(in) + H(+)(out). The enzyme catalyses pyridoxine(out) + n H(+)(out) = pyridoxine(in) + n H(+)(in). Its function is as follows. High-affinity transporter for the intake of thiamine. Essential for spermatogenesis. Mediates H(+)-dependent pyridoxine transport. In Mus musculus (Mouse), this protein is Thiamine transporter 1.